The chain runs to 344 residues: Lipase chaperone (344 aa).

A helical transmembrane segment spans residues 14–34 (AVVYGVVGLAAIAGVAMWSGA).

This sequence belongs to the lipase chaperone family.

It localises to the cell inner membrane. In terms of biological role, may be involved in the folding of the extracellular lipase during its passage through the periplasm. The chain is Lipase chaperone (lifO) from Burkholderia cepacia (Pseudomonas cepacia).